A 252-amino-acid chain; its full sequence is Triosephosphate isomerase (252 aa).

10–12 (NWK) contributes to the substrate binding site. Catalysis depends on His96, which acts as the Electrophile. Glu168 functions as the Proton acceptor in the catalytic mechanism. Substrate-binding positions include Gly174, Ser214, and 235–236 (GG).

It belongs to the triosephosphate isomerase family. Homodimer.

It localises to the cytoplasm. It catalyses the reaction D-glyceraldehyde 3-phosphate = dihydroxyacetone phosphate. The protein operates within carbohydrate biosynthesis; gluconeogenesis. It functions in the pathway carbohydrate degradation; glycolysis; D-glyceraldehyde 3-phosphate from glycerone phosphate: step 1/1. Involved in the gluconeogenesis. Catalyzes stereospecifically the conversion of dihydroxyacetone phosphate (DHAP) to D-glyceraldehyde-3-phosphate (G3P). The protein is Triosephosphate isomerase of Streptococcus pyogenes serotype M1.